The primary structure comprises 175 residues: MTKVNSQKYSKALLEVAQEKGQLEAILTEVSEMIQLFKENNLGAFLANEVYSFSAKSELIDTLLQTSSEVMSNFLNTIRSNGRLADLGEILEETKNAADDMFKIADVEVVSSIALSEAQIEKFKAMAKSKFDLNEVTVINTVNEKILGGFIVNSRGKIIDASLKTQLAKIAAEIL.

The protein belongs to the ATPase delta chain family. As to quaternary structure, F-type ATPases have 2 components, F(1) - the catalytic core - and F(0) - the membrane proton channel. F(1) has five subunits: alpha(3), beta(3), gamma(1), delta(1), epsilon(1). F(0) has three main subunits: a(1), b(2) and c(10-14). The alpha and beta chains form an alternating ring which encloses part of the gamma chain. F(1) is attached to F(0) by a central stalk formed by the gamma and epsilon chains, while a peripheral stalk is formed by the delta and b chains.

It is found in the cell membrane. Its function is as follows. F(1)F(0) ATP synthase produces ATP from ADP in the presence of a proton or sodium gradient. F-type ATPases consist of two structural domains, F(1) containing the extramembraneous catalytic core and F(0) containing the membrane proton channel, linked together by a central stalk and a peripheral stalk. During catalysis, ATP synthesis in the catalytic domain of F(1) is coupled via a rotary mechanism of the central stalk subunits to proton translocation. In terms of biological role, this protein is part of the stalk that links CF(0) to CF(1). It either transmits conformational changes from CF(0) to CF(1) or is implicated in proton conduction. This Lactococcus lactis subsp. cremoris (strain MG1363) protein is ATP synthase subunit delta.